The primary structure comprises 368 residues: 1-deoxy-D-xylulose 5-phosphate reductoisomerase (368 aa).

The NADPH site is built by T10, G11, S12, I13, Q38, and N100. K101 serves as a coordination point for 1-deoxy-D-xylulose 5-phosphate. E102 serves as a coordination point for NADPH. Position 125 (D125) interacts with Mn(2+). Residues S126, E127, S151, and H172 each contribute to the 1-deoxy-D-xylulose 5-phosphate site. Residue E127 coordinates Mn(2+). NADPH is bound at residue G178. 4 residues coordinate 1-deoxy-D-xylulose 5-phosphate: S185, N190, K191, and E194. E194 contacts Mn(2+).

This sequence belongs to the DXR family. Mg(2+) serves as cofactor. Mn(2+) is required as a cofactor.

It catalyses the reaction 2-C-methyl-D-erythritol 4-phosphate + NADP(+) = 1-deoxy-D-xylulose 5-phosphate + NADPH + H(+). Its pathway is isoprenoid biosynthesis; isopentenyl diphosphate biosynthesis via DXP pathway; isopentenyl diphosphate from 1-deoxy-D-xylulose 5-phosphate: step 1/6. Functionally, catalyzes the NADPH-dependent rearrangement and reduction of 1-deoxy-D-xylulose-5-phosphate (DXP) to 2-C-methyl-D-erythritol 4-phosphate (MEP). This chain is 1-deoxy-D-xylulose 5-phosphate reductoisomerase, found in Tropheryma whipplei (strain TW08/27) (Whipple's bacillus).